The sequence spans 190 residues: MGVKIDINRIARDQFILVDNQPYKVVSYEHVKPGKGQAFVRVKAKNMRTGNVTEFTFKSSDSIELADFEQRFMNYSYTDGTYYYFLDTNTYETFAVPAEAMEHEAQFLKEGMQVVVFLDRGNPIGIELPKHEVYEVIETEPGFKGDTATNTLKPAKIETGATVQVPLFINVGDRIKVDTEKGTYIERVNK.

Belongs to the elongation factor P family.

It is found in the cytoplasm. The protein operates within protein biosynthesis; polypeptide chain elongation. In terms of biological role, involved in peptide bond synthesis. Stimulates efficient translation and peptide-bond synthesis on native or reconstituted 70S ribosomes in vitro. Probably functions indirectly by altering the affinity of the ribosome for aminoacyl-tRNA, thus increasing their reactivity as acceptors for peptidyl transferase. The protein is Elongation factor P of Sulfurihydrogenibium sp. (strain YO3AOP1).